The chain runs to 159 residues: MKRPSFLPVLIGTGFGSGFSPFAPGTAGALLASIIWIALYFLLPFTALLWTTAALVVLFTFAGIWAANKLESCWGEDPSRVVVDEMVGVWIPLLAVPDNDRWYWYVIAAFALFRIFDIVKPLGVRKMENFKGGVGVMMDDVLAGVYSFILIAVARWVIG.

The first 16 residues, 1 to 16 (MKRPSFLPVLIGTGFG), serve as a signal peptide directing secretion. The next 4 helical transmembrane spans lie at 30-50 (LLAS…ALLW), 54-74 (ALVV…ESCW), 104-124 (WYVI…PLGV), and 134-154 (VGVM…IAVA).

It localises to the membrane. It catalyses the reaction a 1,2-diacyl-sn-glycero-3-phospho-(1D-myo-inositol-3-phosphate) + H2O = a 1,2-diacyl-sn-glycero-3-phospho-(1D-myo-inositol) + phosphate. In terms of biological role, may be responsible for the conversion of phosphatidylinositol phosphate diacylglycerol (PIP-DAG) to phosphatidylinositol diacylglycerol (PI-DAG), making it a key enzyme in the inositol glycerophospholipid biosynthesis pathway. The polypeptide is Putative phosphatidylinositol-3-phosphatase (Bacteroides thetaiotaomicron (strain ATCC 29148 / DSM 2079 / JCM 5827 / CCUG 10774 / NCTC 10582 / VPI-5482 / E50)).